Reading from the N-terminus, the 169-residue chain is S-ribosylhomocysteine lyase (169 aa).

Residues His54, His58, and Cys128 each coordinate Fe cation.

It belongs to the LuxS family. In terms of assembly, homodimer. It depends on Fe cation as a cofactor.

The catalysed reaction is S-(5-deoxy-D-ribos-5-yl)-L-homocysteine = (S)-4,5-dihydroxypentane-2,3-dione + L-homocysteine. In terms of biological role, involved in the synthesis of autoinducer 2 (AI-2) which is secreted by bacteria and is used to communicate both the cell density and the metabolic potential of the environment. The regulation of gene expression in response to changes in cell density is called quorum sensing. Catalyzes the transformation of S-ribosylhomocysteine (RHC) to homocysteine (HC) and 4,5-dihydroxy-2,3-pentadione (DPD). This is S-ribosylhomocysteine lyase from Shewanella sp. (strain ANA-3).